A 246-amino-acid polypeptide reads, in one-letter code: uncharacterized protein (246 aa).

This is an uncharacterized protein from Thermotoga maritima (strain ATCC 43589 / DSM 3109 / JCM 10099 / NBRC 100826 / MSB8).